A 469-amino-acid chain; its full sequence is Cysteine--tRNA ligase (469 aa).

Position 33 (Cys33) interacts with Zn(2+). The short motif at 35–45 is the 'HIGH' region element; sequence ATVQGLPHIGH. Zn(2+) is bound by residues Cys211, His236, and Glu240. Positions 267 to 271 match the 'KMSKS' region motif; sequence KMSKS. Lys270 is an ATP binding site.

Belongs to the class-I aminoacyl-tRNA synthetase family. As to quaternary structure, monomer. It depends on Zn(2+) as a cofactor.

The protein resides in the cytoplasm. It catalyses the reaction tRNA(Cys) + L-cysteine + ATP = L-cysteinyl-tRNA(Cys) + AMP + diphosphate. The polypeptide is Cysteine--tRNA ligase (cysS) (Mycobacterium tuberculosis (strain CDC 1551 / Oshkosh)).